The sequence spans 112 residues: Putative inner membrane protein YafU (112 aa).

Over 1–21 (MSSERDLVNFLGDFSMDVAKA) the chain is Cytoplasmic. A helical transmembrane segment spans residues 22-42 (VIAGGVATAIGSLASFACVSF). A topological domain (periplasmic) is located at residue G43. Residues 44 to 64 (FPVILVGGAILLTGIVCTVVL) form a helical membrane-spanning segment. The Cytoplasmic segment spans residues 65–112 (NEIDAQCHLSEKLKYAIRDGLKRQQELDKWKRENMTPFMYVLNTPPVI).

Its subcellular location is the cell inner membrane. The protein is Putative inner membrane protein YafU (yafU) of Escherichia coli (strain K12).